The chain runs to 175 residues: Chromobox protein homolog hpl-2 (175 aa).

Positions Phe-19–Arg-78 constitute a Chromo domain. The segment at Ser-71–Lys-109 is disordered. The span at Ser-88–Lys-98 shows a compositional bias: acidic residues. A compositionally biased stretch (basic and acidic residues) spans Asp-99–Lys-109. The region spanning Lys-115 to Ala-172 is the Chromo 2; shadow subtype domain.

As to quaternary structure, interacts with histone H3 when di-, or tri-methylated at 'Lys-27' (H3K27me2/me3), or tri-methylated at 'Lys-9' (H3K9me3). Interacts with Tar DNA-binding protein homolog tdp-1; interaction may maintain localization of hpl-2 to gene bodies. Interacts with histone H1 his-24, probably via interaction with hpl-1. Interacts with chromobox protein homolog hpl-1. In terms of assembly, may form homodimers. Interacts (via chromo (shadow subtype) domain) with zinc finger protein lin-13 (via PLVPV motif); the interaction is direct and influences localization of hpl-2 to nuclear foci.

Its subcellular location is the nucleus. It is found in the chromosome. Seems to be involved in transcriptional silencing in heterochromatin-like complexes. Probably does not act as global transcriptional repressor, instead targeting a subset of genes. Involved in RNA processing mediated by Tar DNA-binding protein homolog tdp-1. Plays a role in linking epigenetic regulation with the innate immune response. Involved in the endoplasmic reticulum (ER) stress response via modulation of the unfolded protein response (UPR), acting mainly through the IRE1-XBP1 pathway and perhaps, to a lesser extent, through the autophagy pathway. May act in a common pathway with retinoblastoma-like protein homolog lin-35 and zinc finger protein lin-13 to influence the ER stress response in the intestine. Plays a role in the formation of the vulva and in fertility, acting together with a CoREST-like complex, and chromobox protein homolog hpl-1. Acting in concert with hpl-1 and histone H1 protein his-24, involved in reproduction, somatic gonad development, male tail development and vulval cell fate specification; perhaps as a result of modulating expression of Hox genes mab-5 and egl-5. In vulval cell fate specification may act by repressing transcription, of EGF family gene lin-3 in hypodermal hyp7, and of homeobox lin-39 in vulval precursor cells (VPC). Role in growth and somatic gonad development is antagonized by histone-lysine N-methyltransferase set-2/SET1. Required for larval development, acting redundantly with hpl-1. Plays a role in regulation of the developmentally arrested larval state known as dauer, longevity, and lipid metabolism. The protein is Chromobox protein homolog hpl-2 of Caenorhabditis elegans.